Reading from the N-terminus, the 457-residue chain is tRNA modification GTPase MnmE (457 aa).

The (6S)-5-formyl-5,6,7,8-tetrahydrofolate site is built by R23, E86, and R125. The 157-residue stretch at 221–377 (GVSVLIAGKP…LREAVFETFI (157 aa)) folds into the TrmE-type G domain. N231 serves as a coordination point for K(+). Residues 231-236 (NVGKSS), 250-256 (TSVPGTT), and 275-278 (DTAG) contribute to the GTP site. S235 lines the Mg(2+) pocket. Residues T250, V252, and T255 each coordinate K(+). T256 contributes to the Mg(2+) binding site. K457 contacts (6S)-5-formyl-5,6,7,8-tetrahydrofolate.

This sequence belongs to the TRAFAC class TrmE-Era-EngA-EngB-Septin-like GTPase superfamily. TrmE GTPase family. Homodimer. Heterotetramer of two MnmE and two MnmG subunits. K(+) is required as a cofactor.

The protein resides in the cytoplasm. Exhibits a very high intrinsic GTPase hydrolysis rate. Involved in the addition of a carboxymethylaminomethyl (cmnm) group at the wobble position (U34) of certain tRNAs, forming tRNA-cmnm(5)s(2)U34. This chain is tRNA modification GTPase MnmE, found in Geobacter metallireducens (strain ATCC 53774 / DSM 7210 / GS-15).